The sequence spans 527 residues: Inositolphosphotransferase 1 (527 aa).

The Cytoplasmic portion of the chain corresponds to Met-1–Leu-24. The helical transmembrane segment at Ile-25–Phe-45 threads the bilayer. The Lumenal portion of the chain corresponds to Lys-46–Ser-99. Residues Ala-100–Ile-120 form a helical membrane-spanning segment. Over Lys-121 to Thr-152 the chain is Cytoplasmic. A helical transmembrane segment spans residues Ile-153–Phe-173. Residues Ala-174–Trp-190 are Lumenal-facing. Residues Phe-191–Phe-211 form a helical membrane-spanning segment. The Cytoplasmic segment spans residues Gln-212 to Cys-219. A helical membrane pass occupies residues Phe-220–Met-240. Topologically, residues Ala-241–Pro-288 are lumenal. A helical membrane pass occupies residues Ile-289–Leu-309. Over Val-310 to Gly-435 the chain is Cytoplasmic. The tract at residues Asn-331–Ser-404 is disordered. The segment covering Glu-376–Ser-389 has biased composition (low complexity). The chain crosses the membrane as a helical span at residues Phe-436–Leu-456. Residues Asp-457–Arg-461 are Lumenal-facing. The chain crosses the membrane as a helical span at residues Phe-462–Val-482. Topologically, residues Leu-483 to Ala-527 are cytoplasmic.

It localises to the golgi apparatus membrane. It carries out the reaction an alpha-D-mannosyl-(1&lt;-&gt;6)-1D-myo-inositol-1-phospho-N-[(R)-2-hydroxy-very-long-chain fatty acyl]-(R)-4-hydroxysphingoid base + a 1,2-diacyl-sn-glycero-3-phospho-(1D-myo-inositol) = an alpha-D-mannosyl-6-(1D-myo-inositol phospho)-(1&lt;-&gt;6)-1D-myo-inositol-1-phospho-N-[(R)-2-hydroxy-very-long-chain fatty acyl]-(R)-4-hydroxysphingoid base + a 1,2-diacyl-sn-glycerol. The enzyme catalyses a mannosylinositol-1-phospho-N-acyl-sphingoid base + a 1,2-diacyl-sn-glycero-3-phospho-(1D-myo-inositol) = an inositol phosphomannosylnositol-1-phospho-N-acylsphingoid base + a 1,2-diacyl-sn-glycerol. It catalyses the reaction a mannosylinositol-1-phospho-N-(2-hydroxyacyl)-4R-hydroxysphingoid base + a 1,2-diacyl-sn-glycero-3-phospho-(1D-myo-inositol) = an inositol phosphomannosylnositol-1-phospho-N-(2-hydroxyacyl)-4R-hydroxysphingoid base + a 1,2-diacyl-sn-glycerol. Catalyzes the addition of a phosphorylinositol group onto mannosyl phosphorylinositol ceramide (MIPC) to form mannosyl diphosphorylinositol ceramide (M(IP)2C), the major sphingolipid in membranes of S.cerevisiae. The protein is Inositolphosphotransferase 1 of Saccharomyces cerevisiae (strain ATCC 204508 / S288c) (Baker's yeast).